We begin with the raw amino-acid sequence, 414 residues long: Imidazolonepropionase (414 aa).

Over residues Met1–Pro20 the composition is skewed to polar residues. The disordered stretch occupies residues Met1–Gln26. Fe(3+)-binding residues include His81 and His83. Residues His81 and His83 each contribute to the Zn(2+) site. Residues Arg90, Tyr153, and His186 each coordinate 4-imidazolone-5-propanoate. Residue Tyr153 participates in N-formimidoyl-L-glutamate binding. His251 provides a ligand contact to Fe(3+). A Zn(2+)-binding site is contributed by His251. Glu254 contacts 4-imidazolone-5-propanoate. Asp325 is a binding site for Fe(3+). Asp325 contacts Zn(2+). Residues Asn327 and Gly329 each contribute to the N-formimidoyl-L-glutamate site. A 4-imidazolone-5-propanoate-binding site is contributed by Ser330.

Belongs to the metallo-dependent hydrolases superfamily. HutI family. Zn(2+) serves as cofactor. Fe(3+) is required as a cofactor.

It is found in the cytoplasm. It carries out the reaction 4-imidazolone-5-propanoate + H2O = N-formimidoyl-L-glutamate. The protein operates within amino-acid degradation; L-histidine degradation into L-glutamate; N-formimidoyl-L-glutamate from L-histidine: step 3/3. Functionally, catalyzes the hydrolytic cleavage of the carbon-nitrogen bond in imidazolone-5-propanoate to yield N-formimidoyl-L-glutamate. It is the third step in the universal histidine degradation pathway. This Desulfotalea psychrophila (strain LSv54 / DSM 12343) protein is Imidazolonepropionase.